Here is a 73-residue protein sequence, read N- to C-terminus: Sec-independent protein translocase protein TatA (73 aa).

Residues 1–21 (MGSFSIWHWLIVLVIVMLVFG) form a helical membrane-spanning segment. The segment at 43–73 (MKEGDDKAAPAKELRDSTTIDVDAKEKTRQQ) is disordered.

The protein belongs to the TatA/E family. In terms of assembly, the Tat system comprises two distinct complexes: a TatABC complex, containing multiple copies of TatA, TatB and TatC subunits, and a separate TatA complex, containing only TatA subunits. Substrates initially bind to the TatABC complex, which probably triggers association of the separate TatA complex to form the active translocon.

The protein localises to the cell inner membrane. Its function is as follows. Part of the twin-arginine translocation (Tat) system that transports large folded proteins containing a characteristic twin-arginine motif in their signal peptide across membranes. TatA could form the protein-conducting channel of the Tat system. The polypeptide is Sec-independent protein translocase protein TatA (Cupriavidus pinatubonensis (strain JMP 134 / LMG 1197) (Cupriavidus necator (strain JMP 134))).